A 135-amino-acid polypeptide reads, in one-letter code: NADH-quinone oxidoreductase subunit K (135 aa).

3 helical membrane-spanning segments follow: residues 33–53 (VLGL…FAIG), 63–83 (FLFM…AFVV), and 95–115 (IMFI…LAIL).

Belongs to the complex I subunit 4L family. In terms of assembly, NDH-1 is composed of 14 different subunits. Subunits NuoA, H, J, K, L, M, N constitute the membrane sector of the complex.

The protein resides in the cell inner membrane. The enzyme catalyses a quinone + NADH + 5 H(+)(in) = a quinol + NAD(+) + 4 H(+)(out). NDH-1 shuttles electrons from NADH, via FMN and iron-sulfur (Fe-S) centers, to quinones in the respiratory chain. The immediate electron acceptor for the enzyme in this species is believed to be ubiquinone. Couples the redox reaction to proton translocation (for every two electrons transferred, four hydrogen ions are translocated across the cytoplasmic membrane), and thus conserves the redox energy in a proton gradient. The sequence is that of NADH-quinone oxidoreductase subunit K from Psychrobacter cryohalolentis (strain ATCC BAA-1226 / DSM 17306 / VKM B-2378 / K5).